The primary structure comprises 348 residues: Macrophage-capping protein (348 aa).

Residue M1 is modified to N-acetylmethionine. One copy of the Gelsolin-like 1 repeat lies at 27–75 (EKLKPVPVAQENQGVFFSGDSYLVLHNGPEEVSHLHLWIGQQSSRDEQG). The short motif at 137–146 (KKLYQVKGKK) is the Nuclear localization signal element. 2 Gelsolin-like repeats span residues 148 to 188 (IRAT…LERN) and 261 to 307 (MNLT…KERQ). S337 is modified (phosphoserine).

This sequence belongs to the villin/gelsolin family. As to quaternary structure, interacts with NUP62. Interacts with NUTF2 and RAN; involved in CAPG nuclear import. Post-translationally, the N-terminus is blocked. As to expression, macrophages and macrophage-like cells.

It is found in the nucleus. It localises to the cytoplasm. The protein resides in the melanosome. The protein localises to the cell projection. Its subcellular location is the lamellipodium. It is found in the ruffle. Its function is as follows. Calcium-sensitive protein which reversibly blocks the barbed ends of actin filaments but does not sever preformed actin filaments. May play an important role in macrophage function. May play a role in regulating cytoplasmic and/or nuclear structures through potential interactions with actin. May bind DNA. The sequence is that of Macrophage-capping protein (CAPG) from Homo sapiens (Human).